The following is a 312-amino-acid chain: Aquaporin-6 (312 aa).

Over 1 to 50 (MDDKFDDDALPNSKTTAKDYEDKLPEYDYTTTFPNTWMRLREPFREYFAE) the chain is Cytoplasmic. A helical transmembrane segment spans residues 51–71 (FVGVAVLIIFGVGADCQVVLS). The Extracellular portion of the chain corresponds to 72-89 (ANTGVASSPKGSYLSLNC). A helical membrane pass occupies residues 90-110 (GWAIGTAMGVWISGGISGGHI). Residues 111–113 (NPA) carry the NPA 1 motif. Topologically, residues 111–128 (NPAVTLAMATWRGFPWWK) are cytoplasmic. Residues 129-149 (VPGFIFAQLLGGIVGAGLVYV) traverse the membrane as a helical segment. The Extracellular portion of the chain corresponds to 150-183 (NYIHAIDIVEGGRHIRTLDTAGLFATYAADYMTN). N183 carries N-linked (GlcNAc...) asparagine glycosylation. Residues 184 to 204 (LSCFFSEFLATAVLIIVIHAM) form a helical membrane-spanning segment. Residues 205–213 (NDKRNTPPP) lie on the Cytoplasmic side of the membrane. A helical membrane pass occupies residues 214 to 234 (AGIVPFVLFFLILGIGASLGM). Over 235-267 (ETGYAINPARDLGPRMLTAMVGYGRQVFAFRNQ) the chain is Extracellular. The short motif at 241–243 (NPA) is the NPA 2 element. A helical membrane pass occupies residues 268–288 (YWIWCPVLAPFLGAQVGTIFY). At 289–312 (DLFFYKGQDNVFGRLGSHIHISPA) the chain is on the cytoplasmic side.

Belongs to the MIP/aquaporin (TC 1.A.8) family.

The protein localises to the membrane. The enzyme catalyses H2O(in) = H2O(out). Water channel required to facilitate the transport of water across membranes. Does not mediate the transport carbon dioxide nor nitric oxide across the membrane. Plays a key role in root water transport of mycorrhizal plant such ectomycorrhizal white spruce or trembling aspen via the hydration at the hyphal-root interphase. Contributes in fungal cellular processes during the basidiocarp formation. In Laccaria bicolor (Bicoloured deceiver), this protein is Aquaporin-6.